Here is a 179-residue protein sequence, read N- to C-terminus: UPF0227 protein Swoo_1808 (179 aa).

Belongs to the UPF0227 family.

The sequence is that of UPF0227 protein Swoo_1808 from Shewanella woodyi (strain ATCC 51908 / MS32).